An 83-amino-acid polypeptide reads, in one-letter code: High-potential iron-sulfur protein (83 aa).

[4Fe-4S] cluster is bound by residues cysteine 43, cysteine 46, cysteine 61, and cysteine 75.

Belongs to the high-potential iron-sulfur protein (HiPIP) family. Homodimer.

The protein resides in the periplasm. Specific class of high-redox-potential 4Fe-4S ferredoxins. Functions in anaerobic electron transport in most purple and in some other photosynthetic bacteria and in at least one genus (Paracoccus) of halophilic, denitrifying bacteria. The chain is High-potential iron-sulfur protein (hip) from Marichromatium gracile (Chromatium gracile).